The chain runs to 274 residues: NH(3)-dependent NAD(+) synthetase (274 aa).

46–53 (GISGGQDS) is a binding site for ATP. Aspartate 52 contacts Mg(2+). Position 140 (arginine 140) interacts with deamido-NAD(+). Position 160 (threonine 160) interacts with ATP. A Mg(2+)-binding site is contributed by glutamate 165. Deamido-NAD(+)-binding residues include lysine 173 and aspartate 180. Positions 189 and 211 each coordinate ATP. 260–261 (HK) lines the deamido-NAD(+) pocket.

The protein belongs to the NAD synthetase family. As to quaternary structure, homodimer.

It carries out the reaction deamido-NAD(+) + NH4(+) + ATP = AMP + diphosphate + NAD(+) + H(+). Its pathway is cofactor biosynthesis; NAD(+) biosynthesis; NAD(+) from deamido-NAD(+) (ammonia route): step 1/1. Catalyzes the ATP-dependent amidation of deamido-NAD to form NAD. Uses ammonia as a nitrogen source. This Streptococcus pneumoniae (strain 70585) protein is NH(3)-dependent NAD(+) synthetase.